The following is a 1268-amino-acid chain: Vigilin (1268 aa).

Ser-2 carries the N-acetylserine modification. At Thr-8 the chain carries Phosphothreonine. Residues Ser-11 and Ser-31 each carry the phosphoserine modification. KH domains follow at residues Gln-150–Val-212, Arg-222–Ile-284, Thr-295–Val-357, Phe-364–Ile-424, Met-435–Leu-497, Glu-507–Met-570, and Ser-581–Ile-643. A phosphothreonine mark is found at Thr-295 and Thr-296. At Ser-317 the chain carries Phosphoserine. Tyr-437 carries the post-translational modification Phosphotyrosine. Ser-645 carries the post-translational modification Phosphoserine. 7 consecutive KH domains span residues Ile-653–Leu-716, Ser-727–Leu-790, Val-800–Ile-863, Gln-873–Leu-967, Pro-972–Leu-1034, Ser-1052–Ile-1117, and Met-1127–Ile-1190. Residues Pro-910–Arg-947 are disordered. The segment covering Gly-932–Arg-947 has biased composition (basic and acidic residues). Residue Lys-991 is modified to N6-acetyllysine. Positions Pro-1213–Arg-1268 are disordered. Positions Trp-1233–Glu-1249 are enriched in polar residues. Phosphoserine is present on residues Ser-1247 and Ser-1252.

The protein localises to the cytoplasm. It localises to the nucleus. Functionally, appears to play a role in cell sterol metabolism. It may function to protect cells from over-accumulation of cholesterol. In Mus musculus (Mouse), this protein is Vigilin (Hdlbp).